An 808-amino-acid chain; its full sequence is DNA replication licensing factor MCM3 (808 aa).

An N-acetylalanine modification is found at Ala2. A phosphoserine mark is found at Ser160 and Ser275. At Lys293 the chain carries N6-acetyllysine. The region spanning 295–502 (IFDQLARSLA…QDREISDHVL (208 aa)) is the MCM domain. Gln353, Leu393, Glu394, Ala395, and Ala397 together coordinate ADP. An Arginine finger motif is present at residues 477 to 480 (SRFD). ATP is bound at residue Ala523. Ser535 bears the Phosphoserine; by ATM mark. Lys547 bears the N6-acetyllysine mark. The residue at position 611 (Ser611) is a Phosphoserine. The interval 662 to 738 (KKRKKRSEDE…QETKESQKVE (77 aa)) is disordered. Arg664 is a binding site for ATP. A phosphoserine mark is found at Ser668 and Ser672. 2 stretches are compositionally biased toward acidic residues: residues 670 to 681 (DESETEDEEEKS) and 704 to 717 (SYDP…EEEM). Thr674 is subject to Phosphothreonine. Phosphoserine is present on Ser681. A Phosphotyrosine modification is found at Tyr708. Residue Ser711 is modified to Phosphoserine. Phosphothreonine occurs at positions 713, 722, and 725. Positions 727 to 738 (DSQETKESQKVE) are enriched in basic and acidic residues. Ser728 and Ser734 each carry phosphoserine.

This sequence belongs to the MCM family. Component of the MCM2-7 complex. The complex forms a toroidal hexameric ring with the proposed subunit order MCM2-MCM6-MCM4-MCM7-MCM3-MCM5. Component of the CMG helicase complex, a hexameric ring of related MCM2-7 subunits stabilized by CDC45 and the tetrameric GINS complex. Associated with the replication-specific DNA polymerase alpha. Interacts with MCMBP. Interacts with ANKRD17. Interacts with MCM3AP isoform MCM3AP; this interaction leads to MCM3 acetylation. Acetylated by MCM3AP. Post-translationally, O-glycosylated (O-GlcNAcylated), in a cell cycle-dependent manner.

The protein localises to the nucleus. The protein resides in the chromosome. It catalyses the reaction ATP + H2O = ADP + phosphate + H(+). Its function is as follows. Acts as a component of the MCM2-7 complex (MCM complex) which is the replicative helicase essential for 'once per cell cycle' DNA replication initiation and elongation in eukaryotic cells. Core component of CDC45-MCM-GINS (CMG) helicase, the molecular machine that unwinds template DNA during replication, and around which the replisome is built. The active ATPase sites in the MCM2-7 ring are formed through the interaction surfaces of two neighboring subunits such that a critical structure of a conserved arginine finger motif is provided in trans relative to the ATP-binding site of the Walker A box of the adjacent subunit. The six ATPase active sites, however, are likely to contribute differentially to the complex helicase activity. Required for the entry in S phase and for cell division. This Pongo abelii (Sumatran orangutan) protein is DNA replication licensing factor MCM3 (MCM3).